Reading from the N-terminus, the 430-residue chain is Drebrin-like protein (430 aa).

The ADF-H domain occupies 4 to 133 (NLSRNGPALQ…EPECIMEKVA (130 aa)). A Phosphothreonine modification is found at Thr26. Phosphoserine occurs at positions 137 and 160. At Lys176 the chain carries N6-acetyllysine. Positions 176 to 231 (KDSFWAKAEKEEENRRLEEKRRAEEAQRQLEQERRERELREAARREQRYQEQGGEA) form a coiled coil. Residues Ala183 and Ser232 each carry the phosphoserine modification. The interval 219 to 283 (RREQRYQEQG…SSPQPGKLRS (65 aa)) is disordered. Polar residues predominate over residues 233–244 (PQRTWEQQQEVV). Positions 245 to 267 (SRNRNEQESAVHPREIFKQKERA) are enriched in basic and acidic residues. Positions 268–277 (MSTTSISSPQ) are enriched in polar residues. Residues Ser269, Ser272, Ser275, and Ser283 each carry the phosphoserine modification. Lys288 carries the post-translational modification N6-acetyllysine. Thr291 bears the Phosphothreonine mark. Phosphotyrosine occurs at positions 334 and 344. One can recognise an SH3 domain in the interval 371-430 (GQGLCARALYDYQAADDTEISFDPENLITGIEVIDEGWWRGYGPDGHFGMFPANYVELIE).

This sequence belongs to the ABP1 family. Interacts with SHANK2, SHANK3 and SYN1. Interacts with FGD1 and DNM1. Interacts with ANKRD54. Interacts with COBL. Interacts with WASL and WIPF1. Interacts with MAP4K1 and PRAM1. In terms of processing, degraded by caspases during apoptosis.

Its subcellular location is the cytoplasm. The protein resides in the cytoskeleton. It is found in the cell projection. It localises to the lamellipodium. The protein localises to the ruffle. Its subcellular location is the cell cortex. The protein resides in the cytosol. It is found in the synapse. It localises to the perikaryon. The protein localises to the neuron projection. Its subcellular location is the cell membrane. The protein resides in the cytoplasmic vesicle. It is found in the clathrin-coated vesicle membrane. It localises to the golgi apparatus membrane. The protein localises to the podosome. Its subcellular location is the early endosome. The protein resides in the dendrite. It is found in the postsynaptic density. Adapter protein that binds F-actin and DNM1, and thereby plays a role in receptor-mediated endocytosis. Plays a role in the reorganization of the actin cytoskeleton, formation of cell projections, such as neurites, in neuron morphogenesis and synapse formation via its interaction with WASL and COBL. Does not bind G-actin and promote actin polymerization by itself. Required for the formation of organized podosome rosettes. May act as a common effector of antigen receptor-signaling pathways in leukocytes. Acts as a key component of the immunological synapse that regulates T-cell activation by bridging TCRs and the actin cytoskeleton to gene activation and endocytic processes. This chain is Drebrin-like protein (DBNL), found in Homo sapiens (Human).